The sequence spans 96 residues: C-C motif chemokine 1 (96 aa).

The first 23 residues, 1 to 23 (MQIITTALVCLLLAGMWPEDVDS), serve as a signal peptide directing secretion. 3 disulfides stabilise this stretch: cysteine 33–cysteine 57, cysteine 34–cysteine 73, and cysteine 49–cysteine 91. N-linked (GlcNAc...) asparagine glycosylation is present at asparagine 52.

Belongs to the intercrine beta (chemokine CC) family. In terms of assembly, monomer.

The protein localises to the secreted. Its function is as follows. Cytokine that is chemotactic for monocytes but not for neutrophils. Binds to CCR8. In Homo sapiens (Human), this protein is C-C motif chemokine 1 (CCL1).